We begin with the raw amino-acid sequence, 298 residues long: Small ribosomal subunit biogenesis GTPase RsgA (298 aa).

The CP-type G domain maps to 67–228; the sequence is TNELIRPPIC…VADTPGFSSL (162 aa). Position 116-119 (116-119) interacts with GTP; the sequence is TKMD. Thr166 bears the Phosphothreonine mark. 171-179 lines the GTP pocket; sequence GQSGVGKSS. Zn(2+)-binding residues include Cys252, Cys257, His259, and Cys265.

The protein belongs to the TRAFAC class YlqF/YawG GTPase family. RsgA subfamily. Monomer, but able to form dimers. Associates with 30S ribosomal subunit; a phospho-mimetic mutation increases association. Probably binds 16S rRNA. Zn(2+) is required as a cofactor. In vitro phosphorylated mostly on Thr (with lower signal on Ser) by PrkC in the presence of poly-L-Lys or myelin basic protein, dephosphorylated by PrpC. Most in vitro phosphorylation occurs on Thr-166, in vivo phosphorylation has not been detected, but it might vary during the cell cycle.

The protein localises to the cytoplasm. Functionally, one of several proteins that assist in the late maturation steps of the functional core of the 30S ribosomal subunit. Helps release RbfA from mature subunits. May play a role in the assembly of ribosomal proteins into the subunit. Circularly permuted GTPase with a low level of activity and slow catalytic turnover, does not act on ATP. GTPase activity is stimulated by the presence of 30S or 70S ribosomes, phosphorylation increases stimulation. Depletion results in increased sensitivity to protein synthesis inhibitors that block the peptide channel or peptidyl transferase center on the ribosome, suggesting this protein functions in conjunction with the ribosome in vivo. Decreasing levels of protein lead to an increase in free 30S and 50S ribosomal subunits and a decrease in assembled 70S ribosomes. Suggested to serve as a specific transcription factor for proteins involved in late stages of peptidoglycan synthesis. The protein is Small ribosomal subunit biogenesis GTPase RsgA of Bacillus subtilis (strain 168).